The primary structure comprises 420 residues: Serine hydroxymethyltransferase (420 aa).

(6S)-5,6,7,8-tetrahydrofolate-binding positions include Leu-121 and 125 to 127 (GHL). At Lys-230 the chain carries N6-(pyridoxal phosphate)lysine. Residue 355 to 357 (SPF) participates in (6S)-5,6,7,8-tetrahydrofolate binding.

It belongs to the SHMT family. As to quaternary structure, homodimer. Pyridoxal 5'-phosphate is required as a cofactor.

It is found in the cytoplasm. The catalysed reaction is (6R)-5,10-methylene-5,6,7,8-tetrahydrofolate + glycine + H2O = (6S)-5,6,7,8-tetrahydrofolate + L-serine. The protein operates within one-carbon metabolism; tetrahydrofolate interconversion. It participates in amino-acid biosynthesis; glycine biosynthesis; glycine from L-serine: step 1/1. Its function is as follows. Catalyzes the reversible interconversion of serine and glycine with tetrahydrofolate (THF) serving as the one-carbon carrier. This reaction serves as the major source of one-carbon groups required for the biosynthesis of purines, thymidylate, methionine, and other important biomolecules. Also exhibits THF-independent aldolase activity toward beta-hydroxyamino acids, producing glycine and aldehydes, via a retro-aldol mechanism. The protein is Serine hydroxymethyltransferase of Streptococcus mutans serotype c (strain ATCC 700610 / UA159).